The following is a 130-amino-acid chain: Ribonuclease P protein component 2 (130 aa).

Belongs to the eukaryotic/archaeal RNase P protein component 2 family. In terms of assembly, consists of a catalytic RNA component and at least 4-5 protein subunits.

It localises to the cytoplasm. The catalysed reaction is Endonucleolytic cleavage of RNA, removing 5'-extranucleotides from tRNA precursor.. Its function is as follows. Part of ribonuclease P, a protein complex that generates mature tRNA molecules by cleaving their 5'-ends. The protein is Ribonuclease P protein component 2 of Methanococcus maripaludis (strain C5 / ATCC BAA-1333).